The sequence spans 88 residues: Small ribosomal subunit protein bS20 (88 aa).

Positions 1–25 (MANTPSAKKAARKIERRTAVNRARR) are disordered.

This sequence belongs to the bacterial ribosomal protein bS20 family.

In terms of biological role, binds directly to 16S ribosomal RNA. This Azorhizobium caulinodans (strain ATCC 43989 / DSM 5975 / JCM 20966 / LMG 6465 / NBRC 14845 / NCIMB 13405 / ORS 571) protein is Small ribosomal subunit protein bS20.